The chain runs to 169 residues: Crossover junction endodeoxyribonuclease RuvC (169 aa).

Residues aspartate 11, glutamate 71, and aspartate 143 contribute to the active site. 3 residues coordinate Mg(2+): aspartate 11, glutamate 71, and aspartate 143.

This sequence belongs to the RuvC family. Homodimer which binds Holliday junction (HJ) DNA. The HJ becomes 2-fold symmetrical on binding to RuvC with unstacked arms; it has a different conformation from HJ DNA in complex with RuvA. In the full resolvosome a probable DNA-RuvA(4)-RuvB(12)-RuvC(2) complex forms which resolves the HJ. Mg(2+) is required as a cofactor.

The protein localises to the cytoplasm. The catalysed reaction is Endonucleolytic cleavage at a junction such as a reciprocal single-stranded crossover between two homologous DNA duplexes (Holliday junction).. The RuvA-RuvB-RuvC complex processes Holliday junction (HJ) DNA during genetic recombination and DNA repair. Endonuclease that resolves HJ intermediates. Cleaves cruciform DNA by making single-stranded nicks across the HJ at symmetrical positions within the homologous arms, yielding a 5'-phosphate and a 3'-hydroxyl group; requires a central core of homology in the junction. The consensus cleavage sequence is 5'-(A/T)TT(C/G)-3'. Cleavage occurs on the 3'-side of the TT dinucleotide at the point of strand exchange. HJ branch migration catalyzed by RuvA-RuvB allows RuvC to scan DNA until it finds its consensus sequence, where it cleaves and resolves the cruciform DNA. In Rhizobium johnstonii (strain DSM 114642 / LMG 32736 / 3841) (Rhizobium leguminosarum bv. viciae), this protein is Crossover junction endodeoxyribonuclease RuvC.